The chain runs to 130 residues: Small ribosomal subunit protein uS11 (130 aa).

The segment at 111 to 130 (IRDVTPVPHNGSRPPKRRRA) is disordered.

The protein belongs to the universal ribosomal protein uS11 family. As to quaternary structure, part of the 30S ribosomal subunit. Interacts with proteins S7 and S18. Binds to IF-3.

In terms of biological role, located on the platform of the 30S subunit, it bridges several disparate RNA helices of the 16S rRNA. Forms part of the Shine-Dalgarno cleft in the 70S ribosome. This is Small ribosomal subunit protein uS11 from Lactobacillus acidophilus (strain ATCC 700396 / NCK56 / N2 / NCFM).